The chain runs to 296 residues: Phosphatidylserine decarboxylase proenzyme (296 aa).

Catalysis depends on charge relay system; for autoendoproteolytic cleavage activity residues Asp-100, His-157, and Ser-263. Ser-263 acts as the Schiff-base intermediate with substrate; via pyruvic acid; for decarboxylase activity in catalysis. Ser-263 is modified (pyruvic acid (Ser); by autocatalysis).

It belongs to the phosphatidylserine decarboxylase family. PSD-B subfamily. Prokaryotic type I sub-subfamily. As to quaternary structure, heterodimer of a large membrane-associated beta subunit and a small pyruvoyl-containing alpha subunit. It depends on pyruvate as a cofactor. Is synthesized initially as an inactive proenzyme. Formation of the active enzyme involves a self-maturation process in which the active site pyruvoyl group is generated from an internal serine residue via an autocatalytic post-translational modification. Two non-identical subunits are generated from the proenzyme in this reaction, and the pyruvate is formed at the N-terminus of the alpha chain, which is derived from the carboxyl end of the proenzyme. The autoendoproteolytic cleavage occurs by a canonical serine protease mechanism, in which the side chain hydroxyl group of the serine supplies its oxygen atom to form the C-terminus of the beta chain, while the remainder of the serine residue undergoes an oxidative deamination to produce ammonia and the pyruvoyl prosthetic group on the alpha chain. During this reaction, the Ser that is part of the protease active site of the proenzyme becomes the pyruvoyl prosthetic group, which constitutes an essential element of the active site of the mature decarboxylase.

The protein resides in the cell membrane. It catalyses the reaction a 1,2-diacyl-sn-glycero-3-phospho-L-serine + H(+) = a 1,2-diacyl-sn-glycero-3-phosphoethanolamine + CO2. It participates in phospholipid metabolism; phosphatidylethanolamine biosynthesis; phosphatidylethanolamine from CDP-diacylglycerol: step 2/2. In terms of biological role, catalyzes the formation of phosphatidylethanolamine (PtdEtn) from phosphatidylserine (PtdSer). This chain is Phosphatidylserine decarboxylase proenzyme, found in Actinobacillus pleuropneumoniae serotype 7 (strain AP76).